Here is a 288-residue protein sequence, read N- to C-terminus: Quinate/shikimate dehydrogenase (288 aa).

Positions 71 and 107 each coordinate substrate. NAD(+)-binding positions include 132-135 (AGGA), 155-158 (NRKD), K205, 232-235 (CVYN), and G255.

This sequence belongs to the shikimate dehydrogenase family. As to quaternary structure, homodimer.

It carries out the reaction L-quinate + NAD(+) = 3-dehydroquinate + NADH + H(+). It catalyses the reaction L-quinate + NADP(+) = 3-dehydroquinate + NADPH + H(+). The catalysed reaction is shikimate + NADP(+) = 3-dehydroshikimate + NADPH + H(+). The enzyme catalyses shikimate + NAD(+) = 3-dehydroshikimate + NADH + H(+). The protein operates within metabolic intermediate biosynthesis; chorismate biosynthesis; chorismate from D-erythrose 4-phosphate and phosphoenolpyruvate: step 4/7. Functionally, the actual biological function of YdiB remains unclear, nor is it known whether 3-dehydroshikimate or quinate represents the natural substrate. Catalyzes the reversible NAD-dependent reduction of both 3-dehydroshikimate (DHSA) and 3-dehydroquinate to yield shikimate (SA) and quinate, respectively. It can use both NAD or NADP for catalysis, however it has higher catalytic efficiency with NAD. In Salmonella agona (strain SL483), this protein is Quinate/shikimate dehydrogenase.